A 131-amino-acid chain; its full sequence is Small ribosomal subunit protein uS11 (131 aa).

This sequence belongs to the universal ribosomal protein uS11 family. In terms of assembly, part of the 30S ribosomal subunit. Interacts with proteins S7 and S18. Binds to IF-3.

In terms of biological role, located on the platform of the 30S subunit, it bridges several disparate RNA helices of the 16S rRNA. Forms part of the Shine-Dalgarno cleft in the 70S ribosome. This Helicobacter pylori (strain G27) protein is Small ribosomal subunit protein uS11.